Consider the following 152-residue polypeptide: Histone H2B.1 (152 aa).

Positions 1-23 (MAPKAEKKPAEKKPAAGEEKSAE) are enriched in basic and acidic residues. Residues 1-60 (MAPKAEKKPAEKKPAAGEEKSAEKAPAGKKPKAEKRLPASKASSKEGGAGDKKGRKKAKK) form a disordered region. Residues Lys-7 and Lys-35 each carry the N6-acetyllysine modification. A Glycyl lysine isopeptide (Lys-Gly) (interchain with G-Cter in ubiquitin) cross-link involves residue Lys-148.

Belongs to the histone H2B family. As to quaternary structure, the nucleosome is a histone octamer containing two molecules each of H2A, H2B, H3 and H4 assembled in one H3-H4 heterotetramer and two H2A-H2B heterodimers. The octamer wraps approximately 147 bp of DNA. Post-translationally, can be acetylated to form H2BK6ac and H2BK33ac. Monoubiquitinated by BRE1 to form H2BK143ub1 and deubiquitinated by UBP26. Required for heterochromatic histone H3 di- and trimethylation at H3K4me. May give a specific tag for epigenetic transcriptional activation.

It localises to the nucleus. It is found in the chromosome. Functionally, core component of nucleosome. Nucleosomes wrap and compact DNA into chromatin, limiting DNA accessibility to the cellular machineries which require DNA as a template. Histones thereby play a central role in transcription regulation, DNA repair, DNA replication and chromosomal stability. DNA accessibility is regulated via a complex set of post-translational modifications of histones, also called histone code, and nucleosome remodeling. This Oryza sativa subsp. indica (Rice) protein is Histone H2B.1.